The following is a 314-amino-acid chain: Dihydroorotate dehydrogenase B (NAD(+)), catalytic subunit (314 aa).

Substrate-binding positions include lysine 55, 79-83, and asparagine 136; that span reads NAMGL. 55–56 serves as a coordination point for FMN; it reads KS. Asparagine 136 serves as a coordination point for FMN. The active-site Nucleophile is cysteine 139. Residues lysine 174 and isoleucine 200 each contribute to the FMN site. Position 201–202 (201–202) interacts with substrate; sequence NT. Residues glycine 226, 252–253, and 274–275 each bind FMN; these read GG and GS.

It belongs to the dihydroorotate dehydrogenase family. Type 1 subfamily. As to quaternary structure, heterotetramer of 2 PyrK and 2 PyrD type B subunits. The cofactor is FMN.

The protein localises to the cytoplasm. It catalyses the reaction (S)-dihydroorotate + NAD(+) = orotate + NADH + H(+). The protein operates within pyrimidine metabolism; UMP biosynthesis via de novo pathway; orotate from (S)-dihydroorotate (NAD(+) route): step 1/1. Functionally, catalyzes the conversion of dihydroorotate to orotate with NAD(+) as electron acceptor. The protein is Dihydroorotate dehydrogenase B (NAD(+)), catalytic subunit (pyrD) of Methanosarcina mazei (strain ATCC BAA-159 / DSM 3647 / Goe1 / Go1 / JCM 11833 / OCM 88) (Methanosarcina frisia).